The sequence spans 330 residues: tRNA-modifying protein YgfZ (330 aa).

Residues tryptophan 28 and tryptophan 190 each contribute to the folate site.

Belongs to the tRNA-modifying YgfZ family.

The protein localises to the cytoplasm. Folate-binding protein involved in regulating the level of ATP-DnaA and in the modification of some tRNAs. It is probably a key factor in regulatory networks that act via tRNA modification, such as initiation of chromosomal replication. The sequence is that of tRNA-modifying protein YgfZ from Serratia proteamaculans (strain 568).